Here is a 331-residue protein sequence, read N- to C-terminus: Inner membrane ABC transporter permease protein YjfF (331 aa).

At Met-1–Asn-5 the chain is on the cytoplasmic side. Residues Leu-6–Phe-26 traverse the membrane as a helical segment. The Periplasmic portion of the chain corresponds to Pro-27 to Asn-42. The chain crosses the membrane as a helical span at residues Ala-43–Leu-63. The Cytoplasmic portion of the chain corresponds to Ser-64–Leu-88. A helical transmembrane segment spans residues Leu-89–Ile-109. Residues Asp-110 to Lys-113 lie on the Periplasmic side of the membrane. The chain crosses the membrane as a helical span at residues Ile-114–Val-134. The Cytoplasmic segment spans residues Ser-135–Gly-159. A helical transmembrane segment spans residues Gly-160–Ala-180. The Periplasmic segment spans residues His-181–Thr-222. A helical membrane pass occupies residues Leu-223–Val-243. Residues Glu-244–Ser-250 are Cytoplasmic-facing. The helical transmembrane segment at Val-251 to Gly-271 threads the bilayer. The Periplasmic segment spans residues Val-272–Lys-294. A helical membrane pass occupies residues Ile-295 to Trp-315. Over Glu-316–Gln-331 the chain is Cytoplasmic.

It belongs to the binding-protein-dependent transport system permease family. AraH/RbsC subfamily. In terms of assembly, the complex is composed of two ATP-binding proteins (YtfR), two transmembrane proteins (YtfT and YjfF) and a solute-binding protein (YtfQ).

The protein resides in the cell inner membrane. Its function is as follows. Part of the ABC transporter complex YtfQRT-YjfF involved in galactofuranose transport. Probably responsible for the translocation of the substrate across the membrane. This chain is Inner membrane ABC transporter permease protein YjfF (yjfF), found in Escherichia coli (strain K12).